Here is a 301-residue protein sequence, read N- to C-terminus: Glycine--tRNA ligase alpha subunit (301 aa).

This sequence belongs to the class-II aminoacyl-tRNA synthetase family. In terms of assembly, tetramer of two alpha and two beta subunits.

The protein resides in the cytoplasm. It carries out the reaction tRNA(Gly) + glycine + ATP = glycyl-tRNA(Gly) + AMP + diphosphate. In Shewanella denitrificans (strain OS217 / ATCC BAA-1090 / DSM 15013), this protein is Glycine--tRNA ligase alpha subunit.